The sequence spans 724 residues: MSLFGTSPEDSSAGNSAHRSKSSLFADEPSLGTGSNANLGSSSLFADDDDLSSGSPWNSNVNKRTARHKLVKTLLSDSDAPESYIDAYDLVLSAGDRVGAGIGLTSVREILSGSGISASDQEKILNIVVSGDIDSANGLGRGEFNVLLALVGLAQEGEDLTLDAVDDRRKKLPAPKSLYLDALRANQESGTPAPSQERPITPPRPASPQQAPNSAHSRRESMTGLESDPWGSPELHRGHAHAQLESDHPVLNGYGSVRSATNAWSSRVGEDNNPNEISNSNRANSQTDSAPSHGSGFGWGESLGNTPSDGGLGGTARAGLGGFGPPSSVHSDSNPRRRSLGIGRVASPPVEEHVTVTLLPEKEGMFMFQHRNYEVKSARRGSTVVRRYSDFVWLLDCLQKRYPFRQLPLLPPKRLSADSNAFLEKRRRGLVRFTNALVRHPVLSQEQLVIMFLTVPTELSVWRKQATISVQDEFTGRDLPPDLEDSLPSTLPDTFETVRGGVKRSAEIYINLCTLLERLAKRNEGLAADHLRFSLALQSLTEVTRDTYAIDTNDVPLLNEGIRATANHLSVSQSLLEDEARAWEEGVLEDLKRQRDCLVSVREMFDRRDRYARNNIPQLERRIENNERKLQDLRSRPQGTVKPGEIEKVEDAIIKDKESIVQQHARGVFIKECIRDEIVYFQQSQYHISRLHQEWSQERVKYAELQADNWRSLSDQVESMPLSG.

A compositionally biased stretch (polar residues) spans 1–17 (MSLFGTSPEDSSAGNSA). Disordered stretches follow at residues 1–39 (MSLF…NANL), 176–242 (KSLY…HAHA), and 265–342 (SSRV…SLGI). A compositionally biased stretch (polar residues) spans 272 to 292 (NNPNEISNSNRANSQTDSAPS). Residues 310–324 (GGLGGTARAGLGGFG) show a composition bias toward gly residues. In terms of domain architecture, PX spans 351–459 (EEHVTVTLLP…IMFLTVPTEL (109 aa)). Positions 387, 389, 413, and 426 each coordinate a 1,2-diacyl-sn-glycero-3-phospho-(1D-myo-inositol-3-phosphate).

It belongs to the sorting nexin family.

It is found in the cytoplasm. Its subcellular location is the membrane. Functionally, required for vacuolar protein sorting. This Aspergillus oryzae (strain ATCC 42149 / RIB 40) (Yellow koji mold) protein is Sorting nexin mvp1 (mvp1).